A 309-amino-acid chain; its full sequence is NAD-dependent protein deacylase sirtuin-5, mitochondrial (309 aa).

Residues 1-35 (MILLPFHTRRLVSHVYCGLKPASKKKGIALEMARP) constitute a mitochondrion transit peptide. The 271-residue stretch at 36–306 (SSNLADFREA…PPAIARHETE (271 aa)) folds into the Deacetylase sirtuin-type domain. 57–76 (GAGVSAESGVPTFRGAGGYW) contacts NAD(+). Residues Tyr101 and Arg104 each contribute to the substrate site. 139–142 (QNID) is an NAD(+) binding site. Residue His157 is the Proton acceptor of the active site. Zn(2+) contacts are provided by Cys165, Cys168, Cys206, and Cys211. NAD(+)-binding positions include 248–250 (GTS), 274–276 (NME), and Cys292.

The protein belongs to the sirtuin family. Class III subfamily. The cofactor is Zn(2+).

The protein resides in the mitochondrion. It localises to the cytoplasm. It is found in the cytosol. The protein localises to the nucleus. The enzyme catalyses N(6)-malonyl-L-lysyl-[protein] + NAD(+) + H2O = 2''-O-malonyl-ADP-D-ribose + nicotinamide + L-lysyl-[protein]. The catalysed reaction is N(6)-succinyl-L-lysyl-[protein] + NAD(+) + H2O = 2''-O-succinyl-ADP-D-ribose + nicotinamide + L-lysyl-[protein]. It catalyses the reaction N(6)-glutaryl-L-lysyl-[protein] + NAD(+) + H2O = 2''-O-glutaryl-ADP-D-ribose + nicotinamide + L-lysyl-[protein]. Functionally, NAD-dependent lysine demalonylase, desuccinylase and deglutarylase that specifically removes malonyl, succinyl and glutaryl groups on target proteins. Has weak NAD-dependent protein deacetylase activity; however this activity may not be physiologically relevant in vivo. The polypeptide is NAD-dependent protein deacylase sirtuin-5, mitochondrial (sirt5) (Xenopus tropicalis (Western clawed frog)).